Reading from the N-terminus, the 346-residue chain is MFATPLRQPTNASGARPAVSMDGQETPFQYEITDHGYGKDAVKVLHVSRKGPVHTIQEFEVGTHLKLYSKKDYYQGNNSDIVATDSQKNTVYLLAKKYGIESPEKFALMLGQHFLNKYSHVEEAHVHVETYPWQRVCQEETKSVNNQGQGSCNNFTSIDNRSLHNHAFIFTPTALHYCDVVIRRTDPKQTVITGIKGLRVLKTTQSSFVNFVNDEFRSLPDQYDRIFSTVVDCSWEYSDTETVNFSRAWQTVKNIILRNFAGDPQVGVSSPSVQHTLYLSEKQVLDVIPQVSVISMTMPNKHYFNFDTKPFQKIVPGDNNEVFIPVDKPHGTIYAQLARKNISSHL.

The segment at 1–23 (MFATPLRQPTNASGARPAVSMDG) is disordered. Active-site charge relay system residues include Lys39 and Thr84. Urate-binding residues include Thr84, Asp85, Phe208, Arg225, Val273, Gln274, and Asn300. The active-site Charge relay system is the His302. The Microbody targeting signal signature appears at 344–346 (SHL).

It belongs to the uricase family. Malpighian tubules.

Its subcellular location is the peroxisome. It catalyses the reaction urate + O2 + H2O = 5-hydroxyisourate + H2O2. Its pathway is purine metabolism; urate degradation; (S)-allantoin from urate: step 1/3. With respect to regulation, repressed by 20-hydroxyecdysone. Its function is as follows. Catalyzes the oxidation of uric acid to 5-hydroxyisourate, which is further processed to form (S)-allantoin. This is Uricase (Uro) from Drosophila pseudoobscura pseudoobscura (Fruit fly).